Reading from the N-terminus, the 311-residue chain is MNKISIIGSGFVGATTAYTLALSGIAKTIVLIDINKDKAEGDALDISHGVPFISPVELYAGDYSDVSGSDIIIITAGAAQKPGETRLDLVKRNTMIFKDIVAKLIKVNDTAIYLIVTNPVDILTYVTYKISGLPYGRVLGSGTVLDSARFRYLLSKHCNIDPRNIHGYIIGEHGDSELAAWSITNIAGIPIDNYCNLCGKACEKDFREEIFNNVVRAAYTIIEKKGATYYAVALAVRRIVEAIFRDENSILTVSSPLTGQYGVTNVALSLPSVVGRNGIVNILELPLSQEEIAAFRRSAEVIKSVIQELDI.

NAD(+) contacts are provided by residues Val-12, Asp-33, Lys-38, Tyr-63, and 77 to 78; that span reads GA. Substrate contacts are provided by residues Gln-80, Arg-86, and 118 to 121; that span reads NPVD. NAD(+)-binding positions include 116 to 118 and Ser-141; that span reads VTN. Residue 146–149 participates in substrate binding; it reads DSAR. The beta-D-fructose 1,6-bisphosphate site is built by Arg-151 and His-166. His-173 acts as the Proton acceptor in catalysis. Residue Tyr-219 is modified to Phosphotyrosine. Position 228 (Thr-228) interacts with substrate.

It belongs to the LDH/MDH superfamily. LDH family. As to quaternary structure, homotetramer.

It localises to the cytoplasm. The catalysed reaction is (S)-lactate + NAD(+) = pyruvate + NADH + H(+). It participates in fermentation; pyruvate fermentation to lactate; (S)-lactate from pyruvate: step 1/1. With respect to regulation, allosterically activated by fructose 1,6-bisphosphate (FBP). In terms of biological role, catalyzes the conversion of lactate to pyruvate. The polypeptide is L-lactate dehydrogenase (Thermoanaerobacter pseudethanolicus (strain ATCC 33223 / 39E) (Clostridium thermohydrosulfuricum)).